We begin with the raw amino-acid sequence, 764 residues long: Transient receptor potential cation channel subfamily V member 2 (764 aa).

The disordered stretch occupies residues 1 to 46; sequence MTSPSSSPVFRLETLDGGQEDGSEADRGKLDFGSGLPPMESQFQGE. Residues 1-388 form a required for interaction with SLC50A1 region; sequence MTSPSSSPVF…LLQAKWDLLI (388 aa). At 1–390 the chain is on the cytoplasmic side; it reads MTSPSSSPVF…QAKWDLLIPK (390 aa). Residue serine 6 is modified to Phosphoserine. ANK repeat units follow at residues 72–114, 115–161, 162–207, 208–243, 244–292, and 293–319; these read NRFD…TEGS, TGKT…DDYY, RGHS…TCFY, FGEL…ATDS, QGNT…IRNL, and QDLT…REFS. Residues 391-411 traverse the membrane as a helical segment; the sequence is FFLNFLCNLIYMFIFTAVAYH. Topologically, residues 412-434 are extracellular; sequence QPTLKKQAAPHLKAEVGNSMLLT. The helical transmembrane segment at 435–455 threads the bilayer; that stretch reads GHILILLGGIYLLVGQLWYFW. At 456–471 the chain is on the cytoplasmic side; that stretch reads RRHVFIWISFIDSYFE. Residues 472-492 traverse the membrane as a helical segment; the sequence is ILFLFQALLTVVSQVLCFLAI. Position 493 (glutamate 493) is a topological domain, extracellular. A helical transmembrane segment spans residues 494–514; the sequence is WYLPLLVSALVLGWLNLLYYT. Topologically, residues 515–537 are cytoplasmic; the sequence is RGFQHTGIYSVMIQKVILRDLLR. Residues 538–558 form a helical membrane-spanning segment; that stretch reads FLLIYLVFLFGFAVALVSLSQ. Positions 562–585 are disordered; it reads RPEAPTGPNATESVQPMEGQEDEG. The N-linked (GlcNAc...) asparagine glycan is linked to asparagine 570. Positions 572–609 form an intramembrane region, pore-forming; sequence TESVQPMEGQEDEGNGAQYRGILEASLELFKFTIGMGE. The helical transmembrane segment at 622–642 threads the bilayer; it reads VLLLLLAYVLLTYILLLNMLI. Over 643-764 the chain is Cytoplasmic; sequence ALMSETVNSV…YVPVQLLQSN (122 aa). The tract at residues 725–756 is disordered; sequence PSGAGVPRTLENPVLASPPKEDEDGASEENYV. Residues serine 751 and serine 763 each carry the phosphoserine modification.

Belongs to the transient receptor (TC 1.A.4) family. TrpV subfamily. TRPV2 sub-subfamily. As to quaternary structure, homotetramer. Interacts with a cAMP-dependent protein kinase type II regulatory subunit (PRKAR2A or PRKAR2B) and ACBD3. Interacts with SLC50A1; the interaction probably occurs intracellularly and depends on TRPV2 N-glycosylation. Post-translationally, N-glycosylated. In terms of processing, phosphorylated by PKA.

Its subcellular location is the cell membrane. The protein resides in the cytoplasm. It is found in the melanosome. The enzyme catalyses Ca(2+)(in) = Ca(2+)(out). The catalysed reaction is Mg(2+)(in) = Mg(2+)(out). It carries out the reaction Na(+)(in) = Na(+)(out). It catalyses the reaction K(+)(in) = K(+)(out). Its function is as follows. Calcium-permeable, non-selective cation channel with an outward rectification. Seems to be regulated, at least in part, by IGF1, PDGF and neuropeptide head activator. May transduce physical stimuli in mast cells. Activated by temperatures higher than 52 degrees Celsius; is not activated by vanilloids and acidic pH. This is Transient receptor potential cation channel subfamily V member 2 (TRPV2) from Homo sapiens (Human).